The sequence spans 493 residues: Ribonuclease Y (493 aa).

The chain crosses the membrane as a helical span at residues 19–39; the sequence is IFAILFLIIVILNLGLLVFLA. Positions 172–241 constitute a KH domain; sequence SASFTVIESD…LTIRNILIND (70 aa). Positions 300–392 constitute an HD domain; it reads VLSHCLETGF…TQIGDKLSAG (93 aa).

Belongs to the RNase Y family.

It localises to the cell membrane. Functionally, endoribonuclease that initiates mRNA decay. The protein is Ribonuclease Y of Mycoplasma pneumoniae (strain ATCC 29342 / M129 / Subtype 1) (Mycoplasmoides pneumoniae).